The chain runs to 309 residues: Olfactory receptor 1A1 (309 aa).

Over 1-25 the chain is Extracellular; sequence MRENNQSSTLEFILLGVTGQQEQED. The N-linked (GlcNAc...) asparagine glycan is linked to Asn5. A helical membrane pass occupies residues 26-49; it reads FFYILFLFIYPITLIGNLLIVLAI. The Cytoplasmic portion of the chain corresponds to 50–57; it reads CSDVHLHN. The chain crosses the membrane as a helical span at residues 58-79; that stretch reads PMYFLLANLSLVDIFFSSVTIP. The Extracellular portion of the chain corresponds to 80–100; sequence KMLANHLLGSKSISFGGCLTQ. An intrachain disulfide couples Cys97 to Cys189. Residues 101 to 120 form a helical membrane-spanning segment; the sequence is MYFMIALGNTDSYILAAMAY. At 121-139 the chain is on the cytoplasmic side; that stretch reads DRAVAISRPLHYTTIMSPR. A helical membrane pass occupies residues 140 to 158; that stretch reads SCIWLIAGSWVIGNANALP. Topologically, residues 159 to 195 are extracellular; sequence HTLLTASLSFCGNQEVANFYCDITPLLKLSCSDIHFH. The helical transmembrane segment at 196–218 threads the bilayer; that stretch reads VKMMYLGVGIFSVPLLCIIVSYI. The Cytoplasmic segment spans residues 219–235; sequence RVFSTVFQVPSTKGVLK. A helical transmembrane segment spans residues 236–258; the sequence is AFSTCGSHLTVVSLYYGTVMGMY. Residues 259-270 lie on the Extracellular side of the membrane; the sequence is FRPLTNYSLKDA. A glycan (N-linked (GlcNAc...) asparagine) is linked at Asn264. A helical membrane pass occupies residues 271-290; it reads VITVMYTAVTPMLNPFIYSL. At 291 to 309 the chain is on the cytoplasmic side; it reads RNRDVKAALRKLFNKRISS.

This sequence belongs to the G-protein coupled receptor 1 family.

Its subcellular location is the cell membrane. In terms of biological role, odorant receptor. This Pan troglodytes (Chimpanzee) protein is Olfactory receptor 1A1 (OR1A1).